We begin with the raw amino-acid sequence, 174 residues long: U1 small nuclear ribonucleoprotein C (174 aa).

The segment at 4-36 adopts a Matrin-type zinc-finger fold; sequence YYCDYCDKYLTHDSPSVRKSHTVGKQHKLAVQL. Low complexity-rich tracts occupy residues 82-109 and 122-140; these read QQQQQQQQQQGILPFQGMQPPPHQQQGM and PHQFNNNNNPHQQHSFQPP. The tract at residues 82–174 is disordered; the sequence is QQQQQQQQQQ…QHNQPTIPGL (93 aa). The span at 141–163 shows a compositional bias: basic residues; that stretch reads HHQHHPHQQHQQHQQHQHQHQHQ. Over residues 164–174 the composition is skewed to low complexity; the sequence is QQHNQPTIPGL.

It belongs to the U1 small nuclear ribonucleoprotein C family. In terms of assembly, component of the U1 snRNP. The U1 snRNP is composed of the U1 snRNA and the 7 core Sm proteins SNRPB, SNRPD1, SNRPD2, SNRPD3, SNRPE, SNRPF and SNRPG that assemble in a heptameric protein ring on the Sm site of the small nuclear RNA to form the core snRNP, and at least 3 U1 snRNP-specific proteins SNRNP70/U1-70K, SNRPA/U1-A and SNRPC/U1-C. SNRPC/U1-C interacts with U1 snRNA and the 5' splice-site region of the pre-mRNA.

It localises to the nucleus. Functionally, component of the spliceosomal U1 snRNP, which is essential for recognition of the pre-mRNA 5' splice-site and the subsequent assembly of the spliceosome. SNRPC/U1-C is directly involved in initial 5' splice-site recognition for both constitutive and regulated alternative splicing. The interaction with the 5' splice-site seems to precede base-pairing between the pre-mRNA and the U1 snRNA. Stimulates commitment or early (E) complex formation by stabilizing the base pairing of the 5' end of the U1 snRNA and the 5' splice-site region. This is U1 small nuclear ribonucleoprotein C from Dictyostelium discoideum (Social amoeba).